Consider the following 236-residue polypeptide: L-aspartate dehydrogenase (236 aa).

NAD(+) is bound by residues 10-11 (AI), Asp31, 58-59 (AS), Tyr66, 80-81 (LS), Ala111, and Asn162. His189 is an active-site residue. 212–215 (NPKT) contacts NAD(+).

This sequence belongs to the L-aspartate dehydrogenase family. In terms of assembly, homodimer.

The enzyme catalyses L-aspartate + NADP(+) + H2O = oxaloacetate + NH4(+) + NADPH + H(+). The catalysed reaction is L-aspartate + NAD(+) + H2O = oxaloacetate + NH4(+) + NADH + H(+). Its pathway is cofactor biosynthesis; NAD(+) biosynthesis; iminoaspartate from L-aspartate (dehydrogenase route): step 1/1. In terms of biological role, specifically catalyzes the NAD or NADP-dependent dehydrogenation of L-aspartate to iminoaspartate. The sequence is that of L-aspartate dehydrogenase from Archaeoglobus fulgidus (strain ATCC 49558 / DSM 4304 / JCM 9628 / NBRC 100126 / VC-16).